The primary structure comprises 474 residues: Methylenetetrahydrofolate--tRNA-(uracil-5-)-methyltransferase TrmFO (474 aa).

An FAD-binding site is contributed by 9–14; the sequence is GGGLAG. The interval 425 to 451 is disordered; sequence PPLERMPRNETGKRLRGPEKAALKKRA. Residues 429-451 show a composition bias toward basic and acidic residues; that stretch reads RMPRNETGKRLRGPEKAALKKRA.

This sequence belongs to the MnmG family. TrmFO subfamily. FAD is required as a cofactor.

Its subcellular location is the cytoplasm. It carries out the reaction uridine(54) in tRNA + (6R)-5,10-methylene-5,6,7,8-tetrahydrofolate + NADH + H(+) = 5-methyluridine(54) in tRNA + (6S)-5,6,7,8-tetrahydrofolate + NAD(+). The catalysed reaction is uridine(54) in tRNA + (6R)-5,10-methylene-5,6,7,8-tetrahydrofolate + NADPH + H(+) = 5-methyluridine(54) in tRNA + (6S)-5,6,7,8-tetrahydrofolate + NADP(+). Functionally, catalyzes the folate-dependent formation of 5-methyl-uridine at position 54 (M-5-U54) in all tRNAs. In Methylorubrum populi (strain ATCC BAA-705 / NCIMB 13946 / BJ001) (Methylobacterium populi), this protein is Methylenetetrahydrofolate--tRNA-(uracil-5-)-methyltransferase TrmFO.